A 365-amino-acid chain; its full sequence is Carbohydrate sulfotransferase 10 (365 aa).

Residues 1-6 are Cytoplasmic-facing; it reads MRRHWL. A helical; Signal-anchor for type II membrane protein transmembrane segment spans residues 7 to 27; it reads LVGACGWVLLILMFVSKFINF. The Lumenal portion of the chain corresponds to 28–356; it reads SFRIPGDYAG…RYQGDFSLFD (329 aa). N-linked (GlcNAc...) asparagine glycans are attached at residues Asn99 and Asn104. 3'-phosphoadenylyl sulfate contacts are provided by residues 132–138 and 194–202; these read PKVGNTQ and RDPFERLIS. The N-linked (GlcNAc...) asparagine glycan is linked to Asn325.

This sequence belongs to the sulfotransferase 2 family.

Its subcellular location is the golgi apparatus membrane. In terms of biological role, catalyzes the transfer of sulfate to position 3 of terminal glucuronic acid of both protein- and lipid-linked oligosaccharides. Participates in biosynthesis of HNK-1 carbohydrate structure, a sulfated glucuronyl-lactosaminyl residue carried by many neural recognition molecules. In Danio rerio (Zebrafish), this protein is Carbohydrate sulfotransferase 10 (chst10).